The sequence spans 213 residues: ER lumen protein-retaining receptor (213 aa).

Topologically, residues 1–2 (MN) are lumenal. A helical membrane pass occupies residues 3 to 21 (IFRITADLAHAVAIVILLL). Residues 22–35 (KIWKSRSCEGISGR) lie on the Cytoplasmic side of the membrane. Residues 36 to 53 (SQILFAVTFFTRYLDLFT) traverse the membrane as a helical segment. Over 54-61 (SFYSLYNT) the chain is Lumenal. Residues 62–80 (VMKVLFLAGSIGTVYLMWV) form a helical membrane-spanning segment. Residues 81–96 (KFKATYDRNNDTFRIE) are Cytoplasmic-facing. The helical transmembrane segment at 97 to 110 (FLVIPSIILALIIN) threads the bilayer. The Lumenal portion of the chain corresponds to 111–117 (HEFMFME). The chain crosses the membrane as a helical span at residues 118 to 137 (VMWTFSIYLEAVAIMPQLFM). Over 138 to 149 (LSRTGNAETITA) the chain is Cytoplasmic. The chain crosses the membrane as a helical span at residues 150–168 (HYLFALGSYRFLYIFNWVY). The Lumenal portion of the chain corresponds to 169 to 178 (RYYTESFFDP). The chain crosses the membrane as a helical span at residues 179-199 (IAVVAGIVQTVLYADFFYLYI). Topologically, residues 200–213 (TRVIQSNRQFEMSA) are cytoplasmic.

The protein belongs to the ERD2 family.

Its subcellular location is the endoplasmic reticulum membrane. Required for the retention of luminal endoplasmic reticulum proteins. Determines the specificity of the luminal ER protein retention system. Also required for normal vesicular traffic through the Golgi. The sequence is that of ER lumen protein-retaining receptor (erd-2.1) from Caenorhabditis briggsae.